The chain runs to 753 residues: Glycerophosphodiester phosphodiesterase GDPDL6 (753 aa).

Positions Met1–Ala17 are cleaved as a signal peptide. 2 GP-PDE domains span residues Pro41 to Ile339 and Ala355 to Leu654. N-linked (GlcNAc...) asparagine glycosylation is found at Asn304, Asn516, Asn603, and Asn715. Positions Pro707 to Gly729 are disordered. The chain crosses the membrane as a helical span at residues Val731–Tyr751.

Belongs to the glycerophosphoryl diester phosphodiesterase family. As to expression, expressed in flowers and siliques.

It localises to the membrane. The catalysed reaction is a sn-glycero-3-phosphodiester + H2O = an alcohol + sn-glycerol 3-phosphate + H(+). This is Glycerophosphodiester phosphodiesterase GDPDL6 from Arabidopsis thaliana (Mouse-ear cress).